The chain runs to 324 residues: Elongation factor P--(R)-beta-lysine ligase (324 aa).

75-77 (SPE) contacts substrate. ATP is bound by residues 99-101 (RNE) and Asn-108. Tyr-117 is a substrate binding site. 243–244 (EL) serves as a coordination point for ATP. Substrate is bound at residue Glu-250. Gly-299 contacts ATP.

Belongs to the class-II aminoacyl-tRNA synthetase family. EpmA subfamily. Homodimer.

The enzyme catalyses D-beta-lysine + L-lysyl-[protein] + ATP = N(6)-((3R)-3,6-diaminohexanoyl)-L-lysyl-[protein] + AMP + diphosphate + H(+). Functionally, with EpmB is involved in the beta-lysylation step of the post-translational modification of translation elongation factor P (EF-P). Catalyzes the ATP-dependent activation of (R)-beta-lysine produced by EpmB, forming a lysyl-adenylate, from which the beta-lysyl moiety is then transferred to the epsilon-amino group of a conserved specific lysine residue in EF-P. The sequence is that of Elongation factor P--(R)-beta-lysine ligase from Pseudoalteromonas translucida (strain TAC 125).